A 353-amino-acid polypeptide reads, in one-letter code: Photosystem II protein D1 (353 aa).

T2 bears the N-acetylthreonine mark. At T2 the chain carries Phosphothreonine. 3 helical membrane passes run 29–46 (YIGW…TATS), 118–133 (HFLL…EWEL), and 142–156 (WIAV…AATA). Residue H118 coordinates chlorophyll a. Y126 contacts pheophytin a. The [CaMn4O5] cluster site is built by D170 and E189. A helical transmembrane segment spans residues 197–218 (FHMLGVAGVFGGSLFSAMHGSL). Residue H198 participates in chlorophyll a binding. Residues H215 and 264–265 (SF) contribute to the a quinone site. Residue H215 coordinates Fe cation. Position 272 (H272) interacts with Fe cation. Residues 274 to 288 (FLAAWPVVGIWFTAL) traverse the membrane as a helical segment. [CaMn4O5] cluster contacts are provided by H332, E333, D342, and A344. Positions 345-353 (AVEAPSTNG) are excised as a propeptide.

This sequence belongs to the reaction center PufL/M/PsbA/D family. In terms of assembly, PSII is composed of 1 copy each of membrane proteins PsbA, PsbB, PsbC, PsbD, PsbE, PsbF, PsbH, PsbI, PsbJ, PsbK, PsbL, PsbM, PsbT, PsbX, PsbY, PsbZ, Psb30/Ycf12, at least 3 peripheral proteins of the oxygen-evolving complex and a large number of cofactors. It forms dimeric complexes. It depends on The D1/D2 heterodimer binds P680, chlorophylls that are the primary electron donor of PSII, and subsequent electron acceptors. It shares a non-heme iron and each subunit binds pheophytin, quinone, additional chlorophylls, carotenoids and lipids. D1 provides most of the ligands for the Mn4-Ca-O5 cluster of the oxygen-evolving complex (OEC). There is also a Cl(-1) ion associated with D1 and D2, which is required for oxygen evolution. The PSII complex binds additional chlorophylls, carotenoids and specific lipids. as a cofactor. In terms of processing, tyr-161 forms a radical intermediate that is referred to as redox-active TyrZ, YZ or Y-Z. C-terminally processed by CTPA; processing is essential to allow assembly of the oxygen-evolving complex and thus photosynthetic growth.

It is found in the plastid. It localises to the chloroplast thylakoid membrane. It carries out the reaction 2 a plastoquinone + 4 hnu + 2 H2O = 2 a plastoquinol + O2. In terms of biological role, photosystem II (PSII) is a light-driven water:plastoquinone oxidoreductase that uses light energy to abstract electrons from H(2)O, generating O(2) and a proton gradient subsequently used for ATP formation. It consists of a core antenna complex that captures photons, and an electron transfer chain that converts photonic excitation into a charge separation. The D1/D2 (PsbA/PsbD) reaction center heterodimer binds P680, the primary electron donor of PSII as well as several subsequent electron acceptors. The protein is Photosystem II protein D1 of Nymphaea alba (White water-lily).